Here is a 123-residue protein sequence, read N- to C-terminus: Small ribosomal subunit protein uS13c (123 aa).

Residues 90–123 (GKRHRNSLPVRGQRTRTNARSRRGAKKTVTGKKK) form a disordered region. A compositionally biased stretch (basic residues) spans 102–123 (QRTRTNARSRRGAKKTVTGKKK).

The protein belongs to the universal ribosomal protein uS13 family. As to quaternary structure, part of the 30S ribosomal subunit.

The protein localises to the plastid. It localises to the chloroplast. Functionally, located at the top of the head of the 30S subunit, it contacts several helices of the 16S rRNA. The polypeptide is Small ribosomal subunit protein uS13c (Thalassiosira pseudonana (Marine diatom)).